The following is a 393-amino-acid chain: S-adenosylmethionine synthase 2 (393 aa).

Glu-9 is a binding site for Mg(2+). Residue His-15 participates in ATP binding. A K(+)-binding site is contributed by Glu-43. Residues Glu-56 and Gln-99 each coordinate L-methionine. ATP-binding positions include 167 to 169, 235 to 238, Asp-246, 252 to 253, Ala-269, Lys-273, and Lys-277; these read DGK, SGRF, and RK. Asp-246 lines the L-methionine pocket. Lys-277 is a binding site for L-methionine.

Belongs to the AdoMet synthase family. In terms of assembly, homotetramer. The cofactor is Mn(2+). It depends on Mg(2+) as a cofactor. Co(2+) serves as cofactor. Requires K(+) as cofactor.

It is found in the cytoplasm. The catalysed reaction is L-methionine + ATP + H2O = S-adenosyl-L-methionine + phosphate + diphosphate. It functions in the pathway amino-acid biosynthesis; S-adenosyl-L-methionine biosynthesis; S-adenosyl-L-methionine from L-methionine: step 1/1. Its function is as follows. Catalyzes the formation of S-adenosylmethionine from methionine and ATP. The reaction comprises two steps that are both catalyzed by the same enzyme: formation of S-adenosylmethionine (AdoMet) and triphosphate, and subsequent hydrolysis of the triphosphate. The sequence is that of S-adenosylmethionine synthase 2 (METK2) from Populus trichocarpa (Western balsam poplar).